The chain runs to 344 residues: Dihydroorotate dehydrogenase (quinone) (344 aa).

Residues 65–69 (AGLDK) and threonine 89 contribute to the FMN site. Lysine 69 provides a ligand contact to substrate. 114-118 (NRLGF) serves as a coordination point for substrate. Residues asparagine 145 and asparagine 178 each contribute to the FMN site. Substrate is bound at residue asparagine 178. Serine 181 serves as the catalytic Nucleophile. Residue asparagine 183 participates in substrate binding. Lysine 223 and threonine 251 together coordinate FMN. Residue 252-253 (NT) participates in substrate binding. FMN is bound by residues glycine 274, glycine 303, and 324–325 (YT).

This sequence belongs to the dihydroorotate dehydrogenase family. Type 2 subfamily. As to quaternary structure, monomer. FMN is required as a cofactor.

The protein localises to the cell membrane. It carries out the reaction (S)-dihydroorotate + a quinone = orotate + a quinol. It participates in pyrimidine metabolism; UMP biosynthesis via de novo pathway; orotate from (S)-dihydroorotate (quinone route): step 1/1. Its function is as follows. Catalyzes the conversion of dihydroorotate to orotate with quinone as electron acceptor. This is Dihydroorotate dehydrogenase (quinone) from Methylibium petroleiphilum (strain ATCC BAA-1232 / LMG 22953 / PM1).